The sequence spans 479 residues: Inhibitory synaptic factor 2A (479 aa).

Phosphoserine is present on Ser-177. Disordered regions lie at residues 226–247 (GRAK…ALRR) and 315–338 (SPEC…PSPT). Basic and acidic residues predominate over residues 228–237 (AKQDRGRPNS). Residues 318-337 (CSEQPSQTHTPPGLGNQPSP) show a composition bias toward polar residues. Residues 353–379 (TEVVDLKAQLQMMENLISSSQETIKVL) are a coiled coil. The span at 449-461 (SPYSQETYSSTPK) shows a compositional bias: polar residues. The disordered stretch occupies residues 449–472 (SPYSQETYSSTPKQKSKTESKKHG).

Belongs to the INSYN2 family. Interacts with GPHN.

It is found in the postsynaptic density. Component of the protein machinery at the inhibitory synapses, probably acting as a scaffold. Inhibitory synapses dampen neuronal activity through postsynaptic hyperpolarization. This synaptic inhibition is fundamental for the functioning of the central nervous system, shaping and orchestrating the flow of information through neuronal networks to generate a precise neural code. This Homo sapiens (Human) protein is Inhibitory synaptic factor 2A.